A 148-amino-acid polypeptide reads, in one-letter code: 3-hydroxyacyl-[acyl-carrier-protein] dehydratase FabZ (148 aa).

His-55 is a catalytic residue.

This sequence belongs to the thioester dehydratase family. FabZ subfamily.

It localises to the cytoplasm. It catalyses the reaction a (3R)-hydroxyacyl-[ACP] = a (2E)-enoyl-[ACP] + H2O. Functionally, involved in unsaturated fatty acids biosynthesis. Catalyzes the dehydration of short chain beta-hydroxyacyl-ACPs and long chain saturated and unsaturated beta-hydroxyacyl-ACPs. The chain is 3-hydroxyacyl-[acyl-carrier-protein] dehydratase FabZ from Haemophilus influenzae (strain 86-028NP).